A 261-amino-acid chain; its full sequence is MDRFLVKGAQGGLLRKQEEQEPTGEEPAVLGGDKESTRKRPRREAPGNGGHSAGPSWRHIRAEGLDCSYTVLFGKAEADEIFQELEKEVEYFTGALARVQVFGKWHSVPRKQATYGDAGLTYTFSGLTLSPKPWIPVLERIRDHVSGVTGQTFNFVLINRYKDGCDHIGEHRDDERELAPGSPIASVSFGACRDFVFRHKDSRGKSPSRRVAVVRLPLAHGSLLMMNHPTNTHWYHSLPVRKKVLAPRVNLTFRKILLTKK.

Positions 1–57 (MDRFLVKGAQGGLLRKQEEQEPTGEEPAVLGGDKESTRKRPRREAPGNGGHSAGPSW) are disordered. A PCNA-binding motif is present at residues 3–7 (RFLVK). Residues 102-104 (FGK) and 122-124 (YTF) each bind substrate. The Fe2OG dioxygenase domain occupies 152–257 (TFNFVLINRY…RVNLTFRKIL (106 aa)). 2-oxoglutarate is bound by residues Asn159, Tyr161, and His171. Fe cation is bound by residues His171 and Asp173. Position 174 (Asp174) interacts with substrate. His236, Arg248, Thr252, and Arg254 together coordinate 2-oxoglutarate. Residue His236 coordinates Fe cation.

The protein belongs to the alkB family. Interacts with PCNA homotrimer; this interaction is enhanced during the S-phase of the cell cycle. Interacts with nucleolar proteins NCL, UBTF and NPM1. Interacts with XRCC5-XRCC6 heterodimer. Requires Fe(2+) as cofactor. As to expression, detected in colon, small intestine, ovary, testis, prostate, skeletal muscle, heart, liver and urinary bladder.

The protein resides in the nucleus. The protein localises to the nucleolus. It is found in the nucleoplasm. It catalyses the reaction a methylated nucleobase within DNA + 2-oxoglutarate + O2 = a nucleobase within DNA + formaldehyde + succinate + CO2. The catalysed reaction is an N(1)-methyl-2'-deoxyadenosine in double-stranded DNA + 2-oxoglutarate + O2 = a 2'-deoxyadenosine in double-stranded DNA + formaldehyde + succinate + CO2 + H(+). The enzyme catalyses an N(1)-methyl-2'-deoxyadenosine in single-stranded DNA + 2-oxoglutarate + O2 = a 2'-deoxyadenosine in single-stranded DNA + formaldehyde + succinate + CO2 + H(+). It carries out the reaction an N(3)-methyl-2'-deoxycytidine in double-stranded DNA + 2-oxoglutarate + O2 = a 2'-deoxycytidine in double-stranded DNA + formaldehyde + succinate + CO2 + H(+). It catalyses the reaction an N(3)-methyl-2'-deoxycytidine in single-stranded DNA + 2-oxoglutarate + O2 = a 2'-deoxycytidine in single-stranded DNA + formaldehyde + succinate + CO2 + H(+). The catalysed reaction is a 1,N(6)-etheno-2'-deoxyadenosine in double-stranded DNA + 2-oxoglutarate + O2 + H2O = a 2'-deoxyadenosine in double-stranded DNA + glyoxal + succinate + CO2. The enzyme catalyses a 1,N(6)-etheno-2'-deoxyadenosine in single-stranded DNA + 2-oxoglutarate + O2 + H2O = a 2'-deoxyadenosine in single-stranded DNA + glyoxal + succinate + CO2. It carries out the reaction a 3,N(4)-etheno-2'-deoxycytidine in double-stranded DNA + 2-oxoglutarate + O2 + H2O = a 2'-deoxycytidine in double-stranded DNA + glyoxal + succinate + CO2. It catalyses the reaction a 3,N(4)-etheno-2'-deoxycytidine in single-stranded DNA + 2-oxoglutarate + O2 + H2O = a 2'-deoxycytidine in single-stranded DNA + glyoxal + succinate + CO2. The catalysed reaction is a 1,N(2)-etheno-2'-deoxyguanosine in double-stranded DNA + 2-oxoglutarate + O2 + H2O = a 2'-deoxyguanosine in double-stranded DNA + glyoxal + succinate + CO2. Its activity is regulated as follows. Activated by ascorbate and magnesium ions. Functionally, dioxygenase that repairs alkylated nucleic acid bases by direct reversal oxidative dealkylation. Can process both double-stranded (ds) and single-stranded (ss) DNA substrates, with a strong preference for dsDNA. Uses molecular oxygen, 2-oxoglutarate and iron as cofactors to oxidize the alkyl groups that are subsequently released as aldehydes, regenerating the undamaged bases. Probes the base pair stability, locates a weakened base pair and flips the damaged base to accommodate the lesion in its active site for efficient catalysis. Repairs monoalkylated bases, specifically N1-methyladenine and N3-methylcytosine, as well as higher order alkyl adducts such as bases modified with exocyclic bridged adducts known as etheno adducts including 1,N6-ethenoadenine, 3,N4-ethenocytosine and 1,N2-ethenoguanine. Acts as a gatekeeper of genomic integrity under alkylation stress. Efficiently repairs alkylated lesions in ribosomal DNA (rDNA). These lesions can cause ss- and dsDNA strand breaks that severely impair rDNA transcription. In a response mechanism to DNA damage, associates with PCNA at replication forks to repair alkylated adducts prior to replication. This is DNA oxidative demethylase ALKBH2 (ALKBH2) from Homo sapiens (Human).